A 316-amino-acid polypeptide reads, in one-letter code: Transaldolase (316 aa).

Lysine 132 (schiff-base intermediate with substrate) is an active-site residue.

Belongs to the transaldolase family. Type 1 subfamily. In terms of assembly, homodimer.

It localises to the cytoplasm. The catalysed reaction is D-sedoheptulose 7-phosphate + D-glyceraldehyde 3-phosphate = D-erythrose 4-phosphate + beta-D-fructose 6-phosphate. It participates in carbohydrate degradation; pentose phosphate pathway; D-glyceraldehyde 3-phosphate and beta-D-fructose 6-phosphate from D-ribose 5-phosphate and D-xylulose 5-phosphate (non-oxidative stage): step 2/3. In terms of biological role, transaldolase is important for the balance of metabolites in the pentose-phosphate pathway. This chain is Transaldolase, found in Vibrio vulnificus (strain YJ016).